The primary structure comprises 495 residues: NAD(+)--protein-arginine ADP-ribosyltransferase Tre1 (495 aa).

The interval 278-309 (PDLQIKGPTPVKKPEPLQPARQPEKASAPKPV) is disordered. One can recognise a TR mART core domain in the interval 315 to 495 (MSLREAVGNQ…VTQFILKEIP (181 aa)). An ART domain region spans residues 344–495 (RSALLTDDQI…VTQFILKEIP (152 aa)). Active-site residues include arginine 406, serine 431, and glutamate 466.

The protein belongs to the Arg-specific ADP-ribosyltransferase family.

It is found in the secreted. The protein localises to the host cytoplasm. It catalyses the reaction L-arginyl-[protein] + NAD(+) = N(omega)-(ADP-D-ribosyl)-L-arginyl-[protein] + nicotinamide + H(+). Its function is as follows. Toxic component of a contact-dependent interbacterial competition system (also called effector-immunity systems). Acts by ADP-ribosylating a number of target proteins in target cells; E.coli target proteins include FtsZ, EFTu, RNase E, Fis, YegQ, GuaB and IF2. This is NAD(+)--protein-arginine ADP-ribosyltransferase Tre1 from Pseudomonas putida (strain GB-1).